A 576-amino-acid polypeptide reads, in one-letter code: Eukaryotic translation initiation factor 3 subunit D (576 aa).

Residues 103–176 are disordered; that stretch reads DSTKTRFGRG…KDYDKPQRNR (74 aa). A compositionally biased stretch (gly residues) spans 110–122; sequence GRGGLARGRGQRG. Over residues 165-176 the composition is skewed to basic and acidic residues; the sequence is GWKDYDKPQRNR. Positions 304–318 are RNA gate; that stretch reads TLDMVTVNENAADAP.

Belongs to the eIF-3 subunit D family. As to quaternary structure, component of the eukaryotic translation initiation factor 3 (eIF-3) complex.

It is found in the cytoplasm. In terms of biological role, mRNA cap-binding component of the eukaryotic translation initiation factor 3 (eIF-3) complex, which is involved in protein synthesis of a specialized repertoire of mRNAs and, together with other initiation factors, stimulates binding of mRNA and methionyl-tRNAi to the 40S ribosome. The eIF-3 complex specifically targets and initiates translation of a subset of mRNAs involved in cell proliferation. In the eIF-3 complex, eif3d specifically recognizes and binds the 7-methylguanosine cap of a subset of mRNAs. The sequence is that of Eukaryotic translation initiation factor 3 subunit D from Botryotinia fuckeliana (strain B05.10) (Noble rot fungus).